Here is a 219-residue protein sequence, read N- to C-terminus: Probable cutinase 4 (219 aa).

Positions 1-17 (MILPSLLVASLSALAAA) are cleaved as a signal peptide. Intrachain disulfides connect C41–C120 and C67–C81. An N-linked (GlcNAc...) asparagine glycan is attached at N99. Residue S131 is the Nucleophile of the active site. C182 and C189 form a disulfide bridge. The active site involves D186. H199 (proton donor/acceptor) is an active-site residue.

It belongs to the cutinase family.

The protein localises to the secreted. It catalyses the reaction cutin + H2O = cutin monomers.. Functionally, catalyzes the hydrolysis of complex carboxylic polyesters found in the cell wall of plants. Degrades cutin, a macromolecule that forms the structure of the plant cuticle. This chain is Probable cutinase 4, found in Aspergillus terreus (strain NIH 2624 / FGSC A1156).